Reading from the N-terminus, the 629-residue chain is Smc-like protein Sph1 (629 aa).

Coiled-coil stretches lie at residues Leu-139–Asp-282 and Ala-318–Asp-487.

This sequence belongs to the Sph1/Sph2 family.

Its subcellular location is the cytoplasm. Its function is as follows. May play a role in a late step of replication. The chain is Smc-like protein Sph1 (sph1) from Halobacterium salinarum (Halobacterium halobium).